Consider the following 74-residue polypeptide: Antimicrobial peptide AcrAP1 (74 aa).

Residues 1 to 22 (MEIKYLLTVFLVLLIVSDHCQA) form the signal peptide. Lysine amide is present on lysine 40. The propeptide occupies 46 to 74 (DLDGQIDRFRNFRKRDAELEELLSKLPIY).

This sequence belongs to the non-disulfide-bridged peptide (NDBP) superfamily. Short antimicrobial peptide (group 4) family. Expressed by the venom gland.

It is found in the secreted. Its subcellular location is the target cell membrane. In terms of biological role, has antimicrobial activity against the Gram-positive bacteria S.aureus (MIC=8 uM) and the yeast C.albicans (MIC=16 uM). Causes hemolysis on horse erythrocytes (64 uM for 100% hemolysis). Minimum bactericidal concentrations have also been tested against S.aureus and is four-fold higher (MBC=32 uM). This is Antimicrobial peptide AcrAP1 from Androctonus crassicauda (Arabian fat-tailed scorpion).